The primary structure comprises 181 residues: ATP synthase subunit delta (181 aa).

This sequence belongs to the ATPase delta chain family. As to quaternary structure, F-type ATPases have 2 components, F(1) - the catalytic core - and F(0) - the membrane proton channel. F(1) has five subunits: alpha(3), beta(3), gamma(1), delta(1), epsilon(1). F(0) has three main subunits: a(1), b(2) and c(10-14). The alpha and beta chains form an alternating ring which encloses part of the gamma chain. F(1) is attached to F(0) by a central stalk formed by the gamma and epsilon chains, while a peripheral stalk is formed by the delta and b chains.

The protein resides in the cell membrane. In terms of biological role, f(1)F(0) ATP synthase produces ATP from ADP in the presence of a proton or sodium gradient. F-type ATPases consist of two structural domains, F(1) containing the extramembraneous catalytic core and F(0) containing the membrane proton channel, linked together by a central stalk and a peripheral stalk. During catalysis, ATP synthesis in the catalytic domain of F(1) is coupled via a rotary mechanism of the central stalk subunits to proton translocation. Functionally, this protein is part of the stalk that links CF(0) to CF(1). It either transmits conformational changes from CF(0) to CF(1) or is implicated in proton conduction. The protein is ATP synthase subunit delta of Desulforamulus reducens (strain ATCC BAA-1160 / DSM 100696 / MI-1) (Desulfotomaculum reducens).